The sequence spans 480 residues: MASFVEMRKLAEAKVQNMIRTIVKPKEQNGNVEPKKEEDEKFESTYKQNENTQITPSSFGKRPLYSKVDINCDKWLMTLDEESRLKIDNPPSLVDGLSKETESELRYLGCELIQQGAILLKLPQTAAATGQILFQRYYYQKSFVRYHFEHAVQACLLLASKIEEEPRRPREVYNVFHRLERLHRLQQSGHDINKETTRGMKPPAVDMNYINTKQHMINSERRILATLGFVVHVKHPHRLIVAYGHTLGITQSRPDILQRSWNYMNDGLRTDIFMRYKPETIACACIFLAARTVENPIALPSTPFHWFEAFDTSDRDVEAIALQLVGLYARRTFPNWPRIKAELDALRSVKDAEMKAVKAKEIAENLAKMAPDGEKSTSTVTIGKDSRKVSPDRKNGTKDRGEADRGKKEKDRHRRRSNDRDGRGDRRDRDKDRGDRRKDEKKDRRKRTRSRSRDRKDKNRNRDVGKRYRKESSTPPRSRR.

The tract at residues 25–58 (PKEQNGNVEPKKEEDEKFESTYKQNENTQITPSS) is disordered. Over residues 33–44 (EPKKEEDEKFES) the composition is skewed to basic and acidic residues. Polar residues predominate over residues 45-58 (TYKQNENTQITPSS). The Cyclin N-terminal domain occupies 91-230 (PSLVDGLSKE…RRILATLGFV (140 aa)). The disordered stretch occupies residues 368-480 (KMAPDGEKST…ESSTPPRSRR (113 aa)). 2 stretches are compositionally biased toward basic and acidic residues: residues 384–409 (KDSR…GKKE) and 418–442 (NDRD…DEKK). Residues 443 to 453 (DRRKRTRSRSR) are compositionally biased toward basic residues. Residues 454–472 (DRKDKNRNRDVGKRYRKES) are compositionally biased toward basic and acidic residues.

Belongs to the cyclin family.

In terms of biological role, involved in pre-mRNA splicing. Functions in association with cyclin-dependent kinases (CDKs). Involved in induction of expression of heat shock protein hsp-16.2 in response to heat shock. Plays a role in male tail development, perhaps acting together with cell cycle regulators cdc-25.2, cdk-1, cyb-3, and cyd-1. The sequence is that of Cyclin L homolog cyl-1 from Caenorhabditis elegans.